Reading from the N-terminus, the 197-residue chain is Molybdenum cofactor guanylyltransferase (197 aa).

GTP-binding positions include Leu-10–Gly-12, Lys-23, Asp-69, and Asp-99. Asp-99 provides a ligand contact to Mg(2+).

This sequence belongs to the MobA family. As to quaternary structure, monomer. Mg(2+) is required as a cofactor.

It is found in the cytoplasm. It carries out the reaction Mo-molybdopterin + GTP + H(+) = Mo-molybdopterin guanine dinucleotide + diphosphate. Its function is as follows. Transfers a GMP moiety from GTP to Mo-molybdopterin (Mo-MPT) cofactor (Moco or molybdenum cofactor) to form Mo-molybdopterin guanine dinucleotide (Mo-MGD) cofactor. This Serratia proteamaculans (strain 568) protein is Molybdenum cofactor guanylyltransferase.